Reading from the N-terminus, the 237-residue chain is Phosphoribosylaminoimidazole-succinocarboxamide synthase (237 aa).

Belongs to the SAICAR synthetase family.

It catalyses the reaction 5-amino-1-(5-phospho-D-ribosyl)imidazole-4-carboxylate + L-aspartate + ATP = (2S)-2-[5-amino-1-(5-phospho-beta-D-ribosyl)imidazole-4-carboxamido]succinate + ADP + phosphate + 2 H(+). It participates in purine metabolism; IMP biosynthesis via de novo pathway; 5-amino-1-(5-phospho-D-ribosyl)imidazole-4-carboxamide from 5-amino-1-(5-phospho-D-ribosyl)imidazole-4-carboxylate: step 1/2. This Erwinia tasmaniensis (strain DSM 17950 / CFBP 7177 / CIP 109463 / NCPPB 4357 / Et1/99) protein is Phosphoribosylaminoimidazole-succinocarboxamide synthase.